Consider the following 1071-residue polypeptide: Intracellular phospholipase A2 (1071 aa).

The segment at 1-22 is disordered; sequence MTTTNKDGPFRQQYLPGVHKEP. ANK repeat units lie at residues 411–440, 479–508, 510–539, 544–570, 578–610, 614–651, and 652–681; these read ENCY…TLFC, DGQS…KFTR, DRNE…EIAN, LGNS…ELGL, AGET…NMNA, HGNT…KINL, and RGES…TRCP. Residues 748-921 form the PNPLA domain; it reads ISMDGGGIRG…ISNNPALDLM (174 aa). The GXGXXG motif lies at 752–757; sequence GGGIRG. The GXSXG signature appears at 784–788; it reads GTSTG. Ser-786 acts as the Nucleophile in catalysis. Catalysis depends on Asp-908, which acts as the Proton acceptor. A DGA/G motif is present at residues 908–910; that stretch reads DGG.

The protein belongs to the patatin family.

The enzyme catalyses a 1,2-diacyl-sn-glycero-3-phosphocholine + H2O = a 1-acyl-sn-glycero-3-phosphocholine + a fatty acid + H(+). In terms of biological role, phospholipase that plays a critical role during oogenesis, ovulation, and/or embryogenesis. In Caenorhabditis elegans, this protein is Intracellular phospholipase A2.